Consider the following 275-residue polypeptide: Adaptin ear-binding coat-associated protein 1 (275 aa).

The disordered stretch occupies residues 166 to 190 (ITTKKGGTSKPKTAGTGGLSLLPPP). The segment covering 167 to 179 (TTKKGGTSKPKTA) has biased composition (low complexity). At Thr-211 the chain carries Phosphothreonine. The interval 215 to 275 (IPKSNHGGSD…APQPSNWVQF (61 aa)) is disordered. 2 short sequence motifs (WXXF motif) span residues 252–255 (WGDF) and 272–275 (WVQF). Residues 256-275 (STASSSVPNQAPQPSNWVQF) show a composition bias toward polar residues.

The protein belongs to the NECAP family. As to quaternary structure, interacts with AP1G1 and AP2A1 components of the adapter protein complexes AP-1 and AP-2. Interacts with the GAE domain proteins GGA1, GGA2 and GGA3.

The protein resides in the cytoplasmic vesicle. Its subcellular location is the clathrin-coated vesicle membrane. The protein localises to the cell membrane. Involved in endocytosis. The sequence is that of Adaptin ear-binding coat-associated protein 1 (NECAP1) from Bos taurus (Bovine).